The primary structure comprises 119 residues: Large ribosomal subunit protein bL17 (119 aa).

It belongs to the bacterial ribosomal protein bL17 family. As to quaternary structure, part of the 50S ribosomal subunit. Contacts protein L32.

This Psychrobacter sp. (strain PRwf-1) protein is Large ribosomal subunit protein bL17.